The chain runs to 762 residues: Polyribonucleotide nucleotidyltransferase (762 aa).

Mg(2+)-binding residues include aspartate 531 and aspartate 537. The KH domain occupies 597-656; sequence PRVTTIKVPVDKIGEVIGPKGKVINSITEETGAQISIEDDGTVFVGATDGPSAQAAIDKI. In terms of domain architecture, S1 motif spans 668-737; it reads GERFLGTVVK…KRGKISLVLV (70 aa).

It belongs to the polyribonucleotide nucleotidyltransferase family. Mg(2+) is required as a cofactor.

Its subcellular location is the cytoplasm. The enzyme catalyses RNA(n+1) + phosphate = RNA(n) + a ribonucleoside 5'-diphosphate. Its function is as follows. Involved in mRNA degradation. Catalyzes the phosphorolysis of single-stranded polyribonucleotides processively in the 3'- to 5'-direction. The protein is Polyribonucleotide nucleotidyltransferase of Mycobacterium marinum (strain ATCC BAA-535 / M).